A 168-amino-acid polypeptide reads, in one-letter code: Prespore-specific protein A (168 aa).

The signal sequence occupies residues 1–19 (MKFQHTFIALLSLLTYANA). O-linked (GlcNAc) threonine glycosylation is found at threonine 110, threonine 114, threonine 116, threonine 118, threonine 120, threonine 122, threonine 124, threonine 126, threonine 128, threonine 130, threonine 132, threonine 134, and threonine 138. Tandem repeats lie at residues 116–119 (TPTV), 120–123 (TPTV), and 124–127 (TPTV). The 3 X 4 AA tandem repeats of T-P-T-V stretch occupies residues 116-127 (TPTVTPTVTPTV). A compositionally biased stretch (low complexity) spans 116 to 131 (TPTVTPTVTPTVTPTP). The disordered stretch occupies residues 116-147 (TPTVTPTVTPTVTPTPTNTPNPTPSQTSTTTG). O-linked (GlcNAc) serine glycosylation is present at serine 140. Glycine 147 carries GPI-like-anchor amidated glycine lipidation. Positions 148 to 168 (SASTVVASLSLIIFSMILSLC) are cleaved as a propeptide — removed in mature form.

The protein belongs to the ponticulin family. O-glycosylated in the repeat region. The oligosaccharides contain N-acetylglucosamine and fucose as the major constituents. Post-translationally, the GPI-like-anchor contains a phosphoceramide group, rather than a phosphatidyl group.

It is found in the cell membrane. May bind F-actin and nucleates actin assembly. The polypeptide is Prespore-specific protein A (pspA) (Dictyostelium discoideum (Social amoeba)).